A 183-amino-acid chain; its full sequence is Large ribosomal subunit protein uL6 (183 aa).

It belongs to the universal ribosomal protein uL6 family. As to quaternary structure, part of the 50S ribosomal subunit.

Its function is as follows. This protein binds to the 23S rRNA, and is important in its secondary structure. It is located near the subunit interface in the base of the L7/L12 stalk, and near the tRNA binding site of the peptidyltransferase center. In Parabacteroides distasonis (strain ATCC 8503 / DSM 20701 / CIP 104284 / JCM 5825 / NCTC 11152), this protein is Large ribosomal subunit protein uL6.